The chain runs to 142 residues: Ribonuclease VapC31 (142 aa).

One can recognise a PINc domain in the interval 3 to 139; the sequence is LLDANVLLAA…ARFASVRHIR (137 aa). Mg(2+) contacts are provided by Asp5 and Asp108.

Belongs to the PINc/VapC protein family. Mg(2+) serves as cofactor.

Functionally, toxic component of a type II toxin-antitoxin (TA) system. An RNase. Its toxic effect is neutralized by coexpression with cognate antitoxin VapB31. The polypeptide is Ribonuclease VapC31 (Mycobacterium tuberculosis (strain CDC 1551 / Oshkosh)).